The primary structure comprises 1181 residues: Katanin p80 WD40 repeat-containing subunit B1 homolog KTN80.2 (1181 aa).

WD repeat units follow at residues 13 to 53 (AHSA…SLMS), 56 to 95 (GHTSAVDSVAFDSAEVLVLAGASSGVIKLWDVEEAKMVRA), 98 to 137 (GHRSNCSAVEFHPFGEFLASGSSDANLKIWDIRKKGCIQT), 140 to 181 (GHSR…HEFK), 183 to 221 (HEGPIRSLDFHPLEFLLATGSADRTVKFWDLETFELIGS), 224 to 264 (PEAT…DGVD), and 266 to 303 (GWSTLGDLCISEGKLLGCSYYQNSVGIWVSDISQIEPY). The DWD box motif lies at 114–130 (FLASGSSDANLKIWDIR). Disordered regions lie at residues 361-383 (AHKSGSLSTPATSTGQAGDNKSL), 503-597 (KPPR…ESKS), 702-739 (TSMATDTPPVTSTRPDRTSATNLTSDVSGVTSKRQTRT), 754-869 (KMKS…VIST), and 988-1008 (TKTQQSSDILTQKEEPQISGR). Composition is skewed to polar residues over residues 365–379 (GSLSTPATSTGQAGD) and 509–526 (RSPSTKYNEARWATSTDS). Composition is skewed to basic and acidic residues over residues 530-553 (DSKKNGLESSRDMDLPTGLRDDRG) and 569-585 (RSERVLSPEKAGDELKS). Polar residues-rich tracts occupy residues 703–739 (SMATDTPPVTSTRPDRTSATNLTSDVSGVTSKRQTRT), 754–791 (KMKSDEPSITSTWPDRTSATDLTSDVSGVISSRQTRTS), 822–841 (SATNLTSDESPVTSTRQAKT), and 850–859 (ILNQRQTTNM). The span at 998-1008 (TQKEEPQISGR) shows a compositional bias: basic and acidic residues.

The protein belongs to the WD repeat KATNB1 family. Component of KTN80-KTN1 complexes composed of a hexamer of KTN1-KTN80 heterodimers that sense microtubule (MT) geometry to confer precise MT severing. Interacts directly with AAA1/KTN1. Interacts with subunits of the CUL4-based E3 ligase complex DDB1A and DDB1B. In terms of tissue distribution, expressed at low levels in siliques, flowers, leaves, stems and roots.

Its subcellular location is the cytoplasm. It is found in the cytoskeleton. Functionally, may participate in a complex which severs microtubules in an ATP-dependent manner. Microtubule severing may promote rapid reorganization of cellular microtubule arrays. Confers precision to microtubule (MT) severing by specific targeting of KTN1 to MT cleavage sites such as crossover or branching nucleation sites. Together with other KTN80s, regulates cell elongation by modulating MT organization. Negative regulator of abscisic acid (ABA) responses. May function as a substrate receptor for cullin-RING ubiquitin ligase 4 complexes (CRL4), a family of E3 ligases involved in protein degradation. This is Katanin p80 WD40 repeat-containing subunit B1 homolog KTN80.2 from Arabidopsis thaliana (Mouse-ear cress).